The chain runs to 437 residues: Na(+)/H(+) antiporter NhaA (437 aa).

Transmembrane regions (helical) follow at residues serine 12 to alanine 32, leucine 65 to leucine 85, alanine 103 to valine 123, glycine 133 to glycine 153, isoleucine 162 to phenylalanine 182, histidine 186 to glycine 206, isoleucine 214 to serine 234, glycine 308 to serine 328, valine 333 to isoleucine 353, isoleucine 377 to leucine 397, and leucine 412 to valine 432.

Belongs to the NhaA Na(+)/H(+) (TC 2.A.33) antiporter family.

The protein resides in the cell inner membrane. It carries out the reaction Na(+)(in) + 2 H(+)(out) = Na(+)(out) + 2 H(+)(in). In terms of biological role, na(+)/H(+) antiporter that extrudes sodium in exchange for external protons. The polypeptide is Na(+)/H(+) antiporter NhaA (Bacteroides fragilis (strain YCH46)).